Consider the following 188-residue polypeptide: dCTP deaminase (188 aa).

109–114 (KSTYAR) lines the dCTP pocket. Residue Glu-135 is the Proton donor/acceptor of the active site. Gln-154, Tyr-168, and Gln-178 together coordinate dCTP.

It belongs to the dCTP deaminase family. In terms of assembly, homotrimer.

It catalyses the reaction dCTP + H2O + H(+) = dUTP + NH4(+). The protein operates within pyrimidine metabolism; dUMP biosynthesis; dUMP from dCTP (dUTP route): step 1/2. In terms of biological role, catalyzes the deamination of dCTP to dUTP. The chain is dCTP deaminase from Helicobacter pylori (strain G27).